The following is a 77-amino-acid chain: Small ribosomal subunit protein uS17 (77 aa).

The protein belongs to the universal ribosomal protein uS17 family. In terms of assembly, part of the 30S ribosomal subunit.

Its function is as follows. One of the primary rRNA binding proteins, it binds specifically to the 5'-end of 16S ribosomal RNA. The chain is Small ribosomal subunit protein uS17 from Rickettsia bellii (strain OSU 85-389).